The chain runs to 467 residues: Trigger factor (467 aa).

In terms of domain architecture, PPIase FKBP-type spans 162 to 243; the sequence is GDFVSIDLSA…LNSVKERHLP (82 aa). Residues 426-435 are compositionally biased toward acidic residues; that stretch reads EEGNELDLDE. The tract at residues 426–467 is disordered; the sequence is EEGNELDLDELFGTQAGEEQGEQAEGTEATDEQSAKADAKAE. A compositionally biased stretch (low complexity) spans 436–452; that stretch reads LFGTQAGEEQGEQAEGT. The span at 458–467 shows a compositional bias: basic and acidic residues; that stretch reads QSAKADAKAE.

This sequence belongs to the FKBP-type PPIase family. Tig subfamily.

The protein localises to the cytoplasm. The enzyme catalyses [protein]-peptidylproline (omega=180) = [protein]-peptidylproline (omega=0). Functionally, involved in protein export. Acts as a chaperone by maintaining the newly synthesized protein in an open conformation. Functions as a peptidyl-prolyl cis-trans isomerase. The polypeptide is Trigger factor (Saccharopolyspora erythraea (strain ATCC 11635 / DSM 40517 / JCM 4748 / NBRC 13426 / NCIMB 8594 / NRRL 2338)).